The sequence spans 205 residues: Protein N-terminal glutamine amidohydrolase (205 aa).

Catalysis depends on residues Cys-20, His-74, and Asp-90.

Belongs to the NTAQ1 family. As to quaternary structure, monomer.

It carries out the reaction N-terminal L-glutaminyl-[protein] + H2O = N-terminal L-glutamyl-[protein] + NH4(+). Its function is as follows. Mediates the side-chain deamidation of N-terminal glutamine residues to glutamate, an important step in N-end rule pathway of protein degradation. Conversion of the resulting N-terminal glutamine to glutamate renders the protein susceptible to arginylation, polyubiquitination and degradation as specified by the N-end rule. Does not act on substrates with internal or C-terminal glutamine and does not act on non-glutamine residues in any position. This Drosophila erecta (Fruit fly) protein is Protein N-terminal glutamine amidohydrolase (tun).